A 763-amino-acid chain; its full sequence is 1,4-alpha-glucan branching enzyme GlgB (763 aa).

Residue aspartate 437 is the Nucleophile of the active site. Glutamate 488 functions as the Proton donor in the catalytic mechanism.

This sequence belongs to the glycosyl hydrolase 13 family. GlgB subfamily. In terms of assembly, monomer.

It carries out the reaction Transfers a segment of a (1-&gt;4)-alpha-D-glucan chain to a primary hydroxy group in a similar glucan chain.. It functions in the pathway glycan biosynthesis; glycogen biosynthesis. Its function is as follows. Catalyzes the formation of the alpha-1,6-glucosidic linkages in glycogen by scission of a 1,4-alpha-linked oligosaccharide from growing alpha-1,4-glucan chains and the subsequent attachment of the oligosaccharide to the alpha-1,6 position. In Synechococcus sp. (strain JA-2-3B'a(2-13)) (Cyanobacteria bacterium Yellowstone B-Prime), this protein is 1,4-alpha-glucan branching enzyme GlgB.